Reading from the N-terminus, the 1349-residue chain is Patatin-like phospholipase domain-containing protein 7 (1349 aa).

The Lumenal portion of the chain corresponds to Met-1–Leu-36. The helical transmembrane segment at Met-37–Val-57 threads the bilayer. Topologically, residues Tyr-58 to Ser-1349 are cytoplasmic. Val-170–Arg-297 contacts a nucleoside 3',5'-cyclic phosphate. Positions Met-340 to Asp-361 are disordered. Residues Ser-341 and Ser-377 each carry the phosphoserine modification. Residues Phe-496–Arg-599 and Ala-610–Lys-715 contribute to the a nucleoside 3',5'-cyclic phosphate site. Positions Val-678 to Arg-964 are involved in the binding to lipid droplets. The PNPLA domain maps to Leu-947–Arg-1113. The GXGXXG motif lies at Gly-951 to Gly-956. The GXSXG motif lies at Gly-978 to Gly-982. The active-site Nucleophile is Ser-980. Asp-1100 serves as the catalytic Proton acceptor. The short motif at Asp-1100–Gly-1102 is the DGA/G element. At Ser-1277 the chain carries Phosphoserine. Phosphothreonine is present on Thr-1281. The tract at residues Asp-1297–Ser-1349 is disordered. Polar residues predominate over residues Ser-1314 to Ser-1331.

The protein belongs to the NTE family. Expressed in the brain, liver, kidney, lung and testis.

Its subcellular location is the endoplasmic reticulum membrane. It localises to the lipid droplet. The enzyme catalyses a 1-acyl-sn-glycero-3-phosphocholine + H2O = sn-glycerol 3-phosphocholine + a fatty acid + H(+). It carries out the reaction 1-(9Z-octadecenoyl)-sn-glycero-3-phosphocholine + H2O = sn-glycerol 3-phosphocholine + (9Z)-octadecenoate + H(+). The catalysed reaction is 1-(9Z-octadecenoyl)-sn-glycero-3-phosphoethanolamine + H2O = sn-glycero-3-phosphoethanolamine + (9Z)-octadecenoate + H(+). It catalyses the reaction 1-(9Z-octadecenoyl)-sn-glycero-3-phospho-L-serine + H2O = sn-glycero-3-phospho-L-serine + (9Z)-octadecenoate + H(+). The enzyme catalyses 1-hexadecanoyl-sn-glycero-3-phosphocholine + H2O = sn-glycerol 3-phosphocholine + hexadecanoate + H(+). It carries out the reaction 1-hexadecanoyl-sn-glycero-3-phosphate + H2O = sn-glycerol 3-phosphate + hexadecanoate + H(+). Functionally, lysophospholipase which preferentially deacylates unsaturated lysophosphatidylcholine (C18:1), generating glycerophosphocholine. Also can deacylate, to a lesser extent, lysophosphatidylethanolamine (C18:1), lysophosphatidyl-L-serine (C18:1) and lysophosphatidic acid (C16:0). This is Patatin-like phospholipase domain-containing protein 7 (Pnpla7) from Rattus norvegicus (Rat).